Here is a 374-residue protein sequence, read N- to C-terminus: Ribosomal RNA large subunit methyltransferase G (374 aa).

The protein belongs to the methyltransferase superfamily. RlmG family.

The protein localises to the cytoplasm. The enzyme catalyses guanosine(1835) in 23S rRNA + S-adenosyl-L-methionine = N(2)-methylguanosine(1835) in 23S rRNA + S-adenosyl-L-homocysteine + H(+). Functionally, specifically methylates the guanine in position 1835 (m2G1835) of 23S rRNA. This Photobacterium profundum (strain SS9) protein is Ribosomal RNA large subunit methyltransferase G.